The primary structure comprises 493 residues: Rho guanine nucleotide exchange factor 9 (493 aa).

In terms of domain architecture, SH3 spans 15 to 74; the sequence is DSIVSAEAVWDHVTMANRGVAFKAGDVIKVLDASNKDWWWGQIDDEEGWFPASFVRLWVN. The interaction with GPHN stretch occupies residues 107-117; the sequence is RDQMRANVINE. Residues 110–294 enclose the DH domain; it reads MRANVINEIM…RNVTQQINER (185 aa). The PH domain maps to 325-432; the sequence is ELIYTGEMAW…WLRAFREERK (108 aa). Residues 453-473 form a disordered region; it reads AMTVRKASKQKGRVGEEENQS.

In terms of assembly, interacts with GPHN. As to expression, detected in brain, throughout the gray matter. Detected at low levels in heart and skeletal muscle.

It localises to the cytoplasm. The protein resides in the postsynaptic density. In terms of biological role, acts as a guanine nucleotide exchange factor (GEF) for CDC42. Promotes formation of GPHN clusters. This chain is Rho guanine nucleotide exchange factor 9 (Arhgef9), found in Rattus norvegicus (Rat).